Consider the following 131-residue polypeptide: Small ribosomal subunit protein uS8 (131 aa).

This sequence belongs to the universal ribosomal protein uS8 family. As to quaternary structure, part of the 30S ribosomal subunit. Contacts proteins S5 and S12.

In terms of biological role, one of the primary rRNA binding proteins, it binds directly to 16S rRNA central domain where it helps coordinate assembly of the platform of the 30S subunit. The sequence is that of Small ribosomal subunit protein uS8 from Campylobacter lari (strain RM2100 / D67 / ATCC BAA-1060).